A 380-amino-acid polypeptide reads, in one-letter code: TPR repeat-containing thioredoxin TDX (380 aa).

Valine 2 carries the post-translational modification N-acetylvaline. Over residues 49–59 (TERDYEDKAET) the composition is skewed to basic and acidic residues. A disordered region spans residues 49 to 115 (TERDYEDKAE…DENRDDAQSE (67 aa)). The span at 69–91 (DDDDDIMESDVELDNSDVVEPDN) shows a compositional bias: acidic residues. Over residues 106-115 (DENRDDAQSE) the composition is skewed to basic and acidic residues. TPR repeat units follow at residues 112–145 (AQSE…NPTS), 147–179 (ILYA…NSDS), and 181–213 (KGYK…DYDE). The segment covering 240–263 (RKEKELQRAERERRKQQEAQEREA) has biased composition (basic and acidic residues). The tract at residues 240–265 (RKEKELQRAERERRKQQEAQEREAQA) is disordered. Positions 252–378 (RRKQQEAQER…LEQKIAQHSS (127 aa)) constitute a Thioredoxin domain. Catalysis depends on nucleophile residues cysteine 304 and cysteine 307. An intrachain disulfide couples cysteine 304 to cysteine 307.

It belongs to the thioredoxin family. As to quaternary structure, oligomerization under high temperature.

Its function is as follows. Thiol-disulfide oxidoreductase that possesses insulin disulfide bonds reducing activity, disulfide reductase, foldase chaperone and holdase chaperone activities. Heat shock causes oligomerization and formation of high molecular weiht (HMW) complexes with concomitant functional switching from a disulfide reductase and foldase chaperone to a holdase chaperone. May interact with HSP70 proteins through the TPR repeats. The polypeptide is TPR repeat-containing thioredoxin TDX (TDX) (Arabidopsis thaliana (Mouse-ear cress)).